Consider the following 651-residue polypeptide: Acetyl-coenzyme A synthetase (651 aa).

CoA contacts are provided by residues 190-193, threonine 312, and asparagine 336; that span reads RGGK. Residues 388 to 390, 412 to 417, aspartate 501, and arginine 516 each bind ATP; these read GEP and DTWWQT. CoA is bound at residue serine 524. Arginine 527 lines the ATP pocket. Positions 538, 540, and 543 each coordinate Mg(2+). Arginine 585 contacts CoA. At lysine 610 the chain carries N6-acetyllysine.

The protein belongs to the ATP-dependent AMP-binding enzyme family. The cofactor is Mg(2+). In terms of processing, acetylated. Deacetylation by the SIR2-homolog deacetylase activates the enzyme.

The catalysed reaction is acetate + ATP + CoA = acetyl-CoA + AMP + diphosphate. Its function is as follows. Catalyzes the conversion of acetate into acetyl-CoA (AcCoA), an essential intermediate at the junction of anabolic and catabolic pathways. AcsA undergoes a two-step reaction. In the first half reaction, AcsA combines acetate with ATP to form acetyl-adenylate (AcAMP) intermediate. In the second half reaction, it can then transfer the acetyl group from AcAMP to the sulfhydryl group of CoA, forming the product AcCoA. The protein is Acetyl-coenzyme A synthetase of Mesorhizobium japonicum (strain LMG 29417 / CECT 9101 / MAFF 303099) (Mesorhizobium loti (strain MAFF 303099)).